A 435-amino-acid chain; its full sequence is MTSQGNKRTTKEGFGDLRFQNVSLLKNRSWPSLSSAKGRCRAVLEPLPDHRRNLAGVPGGEKCNSNNDYEDPEFQLLKAWPSMKILPARPIQESEYADTRYFQDTMEAPLLLPPKASVSTERQTRDVRMTHLEEVDKPTFKDVRSQRFKGFKYTKINKTPLPPPRPAITLPKKYQPLPPAPPEESSAYFAPKPTFPEVQRGPRQRSAKDFSRVLGAEEESHHQTKPESSCPSSNQNTQKSPPAIASSSYMPGKHSIQARDHTGSMQHCPAQRCQAAASHSPRMLPYENTNSEKPDPTKPDEKDVWQNEWYIGEYSRQAVEDVLMKENKDGTFLVRDCSTKSKAEPYVLVVFYGNKVYNVKIRFLESNQQFALGTGLRGNEMFDSVEDIIEHYTYFPILLIDGKDKAARRKQCYLTQPLPLARLLLTQYSSQALHE.

Residues Y69 and Y96 each carry the phosphotyrosine; by LYN modification. Positions 155-303 are disordered; it reads KINKTPLPPP…PDPTKPDEKD (149 aa). Residues 160–165 are mediates interaction with PLCG1; essential for BCR signaling; involved in restoration of BCR-induced calcium response and ERK2 and JNK2 activation in BLNK-deficient cells expressing LAT; it reads PLPPPR. The interval 178–182 is mediates interaction with LAT, GRB2, and FGR; involved in translocation to the glycolipid-enriched microdomain and restoration of BCR-induced calcium response in BLNK-deficient DT40 cells expressing LAT; that stretch reads PPAPP. The span at 226–249 shows a compositional bias: polar residues; sequence PESSCPSSNQNTQKSPPAIASSSY. Residues 290–303 are compositionally biased toward basic and acidic residues; sequence NSEKPDPTKPDEKD. The 110-residue stretch at 309–418 folds into the SH2 domain; sequence WYIGEYSRQA…RKQCYLTQPL (110 aa).

In terms of assembly, when phosphorylated, interacts with PLCG1, PLCG2, GRB2, VAV and LAT. Associated with a tyrosine-phosphorylated polypeptide (p92) in response to immunoreceptor stimulation. Interacts with LBR and AGO2. Interacts with FGR. Part of a complex consisting of CLNK, SKAP1 and FYB1. Interacts (via SH2 domain) with FYB1; this interaction allows SKAP1 and FYB1 to promote tyrosine phosphorylation of CLNK by LYN. Interacts (via SH2 domain) with MAP4K1. Post-translationally, tyrosine-phosphorylated upon BCR cross-linking. Tyrosine phosphorylation at both Tyr-69 and Tyr-96 are required for BCR-induced calcium response and are essential to restore PLCG2-mediated signaling in BLNK-deficient DT40 cells, but this phosphorylation is dispensable in cells expressing LAT. Interacts with the SH2 domain of PLCG1 via phosphorylated Tyr-96. Tyrosine phosphorylation is increased when complexed with SKAP1 and FYB1. As to expression, expressed in T-cells, mast cells, natural killer and natural killer T cells (at protein level). Expressed in cytokine-stimulated hemopoietic cells.

It is found in the cytoplasm. In terms of biological role, an adapter protein which plays a role in the regulation of immunoreceptor signaling, including PLC-gamma-mediated B-cell antigen receptor (BCR) signaling and FC-epsilon R1-mediated mast cell degranulation. Together with FGR, it acts as a negative regulator of natural killer cell-activating receptors and inhibits interferon-gamma production. Acts as a positive regulator of both T-cell receptor and natural killer T (NKT) cell receptor signaling in CD4-positive NKT cells. Together with MAP4K1, it enhances CD3-triggered activation of T-cells and subsequent IL2 production. May be involved in tumor necrosis factor induced cell death by promoting reactive oxidative species generation, and MLKL oligomerization, ultimately leading to necrosis. Involved in phosphorylation of LAT. May be involved in high affinity immunoglobulin epsilon receptor signaling in mast cells. In Mus musculus (Mouse), this protein is Cytokine-dependent hematopoietic cell linker (Clnk).